The sequence spans 302 residues: Probable alpha-L-glutamate ligase (302 aa).

The ATP-grasp domain maps to Leu112–Glu294. ATP contacts are provided by residues Lys148, Asp185 to Phe186, Asp194, and Arg218 to Asn220. Mg(2+)-binding residues include Asp255, Glu267, and Asn269. Mn(2+) is bound by residues Asp255, Glu267, and Asn269.

It belongs to the RimK family. Mg(2+) serves as cofactor. It depends on Mn(2+) as a cofactor.

This chain is Probable alpha-L-glutamate ligase, found in Haemophilus influenzae (strain 86-028NP).